The chain runs to 174 residues: UPF0113 protein AF_0058 (174 aa).

The PUA domain occupies 87-161 (RNRVWVNERG…KVFVENLVDR (75 aa)).

It belongs to the UPF0113 family.

In Archaeoglobus fulgidus (strain ATCC 49558 / DSM 4304 / JCM 9628 / NBRC 100126 / VC-16), this protein is UPF0113 protein AF_0058.